A 517-amino-acid polypeptide reads, in one-letter code: Glutamate--tRNA ligase (517 aa).

A 'HIGH' region motif is present at residues 14 to 24 (PSPTGPLHIGG). The 'KMSKS' region motif lies at 266-270 (KLSKR). K269 is a binding site for ATP.

The protein belongs to the class-I aminoacyl-tRNA synthetase family. Glutamate--tRNA ligase type 1 subfamily. In terms of assembly, monomer.

The protein localises to the cytoplasm. It carries out the reaction tRNA(Glu) + L-glutamate + ATP = L-glutamyl-tRNA(Glu) + AMP + diphosphate. Its function is as follows. Catalyzes the attachment of glutamate to tRNA(Glu) in a two-step reaction: glutamate is first activated by ATP to form Glu-AMP and then transferred to the acceptor end of tRNA(Glu). The protein is Glutamate--tRNA ligase of Cytophaga hutchinsonii (strain ATCC 33406 / DSM 1761 / CIP 103989 / NBRC 15051 / NCIMB 9469 / D465).